A 231-amino-acid chain; its full sequence is Ribose-5-phosphate isomerase A (231 aa).

Substrate contacts are provided by residues 31–34, 86–89, and 100–103; these read TGST, DGAD, and KGLG. The Proton acceptor role is filled by Glu-109. Lys-127 is a substrate binding site.

The protein belongs to the ribose 5-phosphate isomerase family. As to quaternary structure, homodimer.

It carries out the reaction aldehydo-D-ribose 5-phosphate = D-ribulose 5-phosphate. It functions in the pathway carbohydrate degradation; pentose phosphate pathway; D-ribose 5-phosphate from D-ribulose 5-phosphate (non-oxidative stage): step 1/1. Its function is as follows. Catalyzes the reversible conversion of ribose-5-phosphate to ribulose 5-phosphate. This chain is Ribose-5-phosphate isomerase A, found in Gluconobacter oxydans (strain 621H) (Gluconobacter suboxydans).